Reading from the N-terminus, the 1030-residue chain is Zinc finger and SCAN domain-containing protein 20 (1030 aa).

Residues 22–42 form a disordered region; the sequence is DSWGSDSRPEKESHSPVPGPE. In terms of domain architecture, SCAN box spans 45-127; it reads RRCFRQFRYR…ALVEDWHREA (83 aa). Disordered regions lie at residues 178-201, 213-285, 411-441, and 578-600; these read DLSKMPPESLKESAVLTPQAPTVP, GKSQ…DSAQ, SGGPGEAVALPRLGDSDTEMDDQDEGSWEPE, and TGLPGSGQSSTEADDQEAWGEME. Positions 225–240 are enriched in basic and acidic residues; the sequence is AKKEPCQDPAGGDRGD. Composition is skewed to acidic residues over residues 426-441 and 589-600; these read SDTEMDDQDEGSWEPE and EADDQEAWGEME. The C2H2-type 1; degenerate zinc-finger motif lies at 697-719; that stretch reads YGCDTRAKSFSRKVHFFAPQRTH. A C2H2-type 2; degenerate zinc finger spans residues 725-747; that stretch reads YKCLGSGKSFSDRANLSTHQRIH. 2 C2H2-type zinc fingers span residues 753–775 and 781–803; these read YRCLECGKSFNDPSNLITHQRTH and YKCGLCWKSFNQSSNLLKHQRVH. Disordered stretches follow at residues 801 to 820 and 828 to 850; these read RVHLGGPPNQRDEPGENFGQ and WRRNSTQEGPKEPQNISMGADSP. 6 consecutive C2H2-type zinc fingers follow at residues 862 to 884, 890 to 912, 918 to 940, 946 to 968, 974 to 996, and 1002 to 1024; these read YSCPECGRCFSKSSALTSHQRIH, YECAVCGKSFSKSSSLANHRRTH, HKCADCGKCFSERSKLITHQRVH, YECPECGKFFRDRSNLITHQRIH, YKCRECGKCFNQSSSLIIHQRIH, and YKCTECGKDFNNSSHFSAHRRTH.

Belongs to the krueppel C2H2-type zinc-finger protein family.

It localises to the nucleus. Its function is as follows. May be involved in transcriptional regulation. The protein is Zinc finger and SCAN domain-containing protein 20 (Zscan20) of Mus musculus (Mouse).